We begin with the raw amino-acid sequence, 741 residues long: Protein lin-54 homolog (741 aa).

One can recognise a CRC domain in the interval 513–626 (PRKPCNCTKS…KCIGCKNFEE (114 aa)). The DNA-binding stretch occupies residues 515–528 (KPCNCTKSLCLKLY). Zn(2+) contacts are provided by C517, C519, C524, C529, C531, C538, C541, C543, and C546. The tract at residues 575–588 (IGKGKEGESDRRHS) is linker. 9 residues coordinate Zn(2+): C591, C593, C598, C603, C605, C612, C616, C618, and C621. Residues 591–604 (CNCKRSGCLKNYCE) are DNA-binding.

The protein belongs to the lin-54 family. As to quaternary structure, component of the DREAM complex.

The protein localises to the nucleus. Component of the DREAM complex, a multiprotein complex that can both act as a transcription activator or repressor depending on the context. Specifically recognizes the consensus motif 5'-TTYRAA-3' in target DNA. In Xenopus tropicalis (Western clawed frog), this protein is Protein lin-54 homolog (lin54).